Here is a 532-residue protein sequence, read N- to C-terminus: Cytokinin dehydrogenase 8 (532 aa).

An N-terminal signal peptide occupies residues 1-26; the sequence is MELKAMYLYAAVLAVLLCSSVNFIQS. The FAD-binding PCMH-type domain maps to 51–238; it reads VSDAPFAVMR…TRARIPLQLA (188 aa). Positions 87, 89, and 91 each coordinate FAD. Histidine 92 is subject to Pros-8alpha-FAD histidine. Residues serine 93, glutamine 97, aspartate 162, threonine 167, serine 173, isoleucine 177, and isoleucine 228 each coordinate FAD. N-linked (GlcNAc...) asparagine glycosylation occurs at asparagine 420. FAD contacts are provided by tyrosine 482 and glutamine 520.

Belongs to the oxygen-dependent FAD-linked oxidoreductase family. In terms of assembly, monomer. FAD is required as a cofactor.

The protein localises to the secreted. The protein resides in the extracellular space. It carries out the reaction N(6)-dimethylallyladenine + A + H2O = 3-methyl-2-butenal + adenine + AH2. Functionally, catalyzes the oxidation of cytokinins, a family of N(6)-substituted adenine derivatives that are plant hormones, where the substituent is an isopentenyl group. The protein is Cytokinin dehydrogenase 8 (CKX8) of Oryza sativa subsp. indica (Rice).